Consider the following 130-residue polypeptide: uncharacterized protein (130 aa).

2 stretches are compositionally biased toward polar residues: residues 1–27 (MEIL…QPSQ) and 36–46 (QAENQETAKNG). 2 disordered regions span residues 1–46 (MEIL…AKNG) and 103–130 (VSAQ…ELDL). The stretch at 27 to 51 (QDAHEKARQQAENQETAKNGMISQI) forms a coiled coil.

Belongs to the PDCD5 family.

This is an uncharacterized protein from Caenorhabditis elegans.